Consider the following 333-residue polypeptide: Mevalonate kinase (333 aa).

109–119 (PVGAGLGSSAA) provides a ligand contact to ATP. Asp160 acts as the Proton acceptor in catalysis.

Belongs to the GHMP kinase family. Mevalonate kinase subfamily. Homodimer. The cofactor is Mg(2+).

Its subcellular location is the cytoplasm. It catalyses the reaction (R)-mevalonate + ATP = (R)-5-phosphomevalonate + ADP + H(+). The protein operates within isoprenoid biosynthesis; isopentenyl diphosphate biosynthesis via mevalonate pathway; isopentenyl diphosphate from (R)-mevalonate: step 1/3. In terms of biological role, catalyzes the phosphorylation of (R)-mevalonate (MVA) to (R)-mevalonate 5-phosphate (MVAP). Functions in the mevalonate (MVA) pathway leading to isopentenyl diphosphate (IPP), a key precursor for the biosynthesis of isoprenoid compounds such as archaeal membrane lipids. The protein is Mevalonate kinase of Thermococcus sibiricus (strain DSM 12597 / MM 739).